A 962-amino-acid chain; its full sequence is Exportin-T (962 aa).

The residue at position 1 (M1) is an N-acetylmethionine. Residues 1 to 385 (MDEQALLGLN…MLAVMKKLTY (385 aa)) form a necessary for interaction with Ran, nuclear localization and nuclear import region. Positions 443–962 (FMEVEVAIRL…LKVFFQRAKP (520 aa)) are necessary for tRNA-binding, cytoplasmic localization and nuclear export. Residue K634 is modified to N6-acetyllysine.

Belongs to the exportin family. In terms of assembly, found in a complex with XPOT, Ran and tRNA. Probably found in a complex with nucleoporins. Interacts with Ran and tRNA in a GTP-dependent manner.

The protein resides in the nucleus. It is found in the cytoplasm. Its function is as follows. Mediates the nuclear export of aminoacylated tRNAs. In the nucleus binds to tRNA and to the GTPase Ran in its active GTP-bound form. Docking of this trimeric complex to the nuclear pore complex (NPC) is mediated through binding to nucleoporins. Upon transit of a nuclear export complex into the cytoplasm, disassembling of the complex and hydrolysis of Ran-GTP to Ran-GDP (induced by RANBP1 and RANGAP1, respectively) cause release of the tRNA from the export receptor. XPOT then return to the nuclear compartment and mediate another round of transport. The directionality of nuclear export is thought to be conferred by an asymmetric distribution of the GTP- and GDP-bound forms of Ran between the cytoplasm and nucleus. The chain is Exportin-T (XPOT) from Homo sapiens (Human).